The chain runs to 386 residues: Putative matrix metalloproteinase (386 aa).

The first 34 residues, Met-1–Ser-34, serve as a signal peptide directing secretion. N-linked (GlcNAc...) asparagine; by host glycosylation is found at Asn-14 and Asn-58. Position 186 (His-186) interacts with Zn(2+). Residue Glu-187 is part of the active site. Residues His-190 and His-196 each contribute to the Zn(2+) site. The interval Asn-235–Arg-258 is disordered.

It belongs to the peptidase M10A family. It depends on Zn(2+) as a cofactor.

The protein is Putative matrix metalloproteinase of Spodoptera frugiperda (Fall armyworm).